The chain runs to 34 residues: Photosystem II reaction center protein M (34 aa).

The chain crosses the membrane as a helical span at residues 5–25 (ILAFIATVLFILVPTAFLLII).

This sequence belongs to the PsbM family. As to quaternary structure, PSII is composed of 1 copy each of membrane proteins PsbA, PsbB, PsbC, PsbD, PsbE, PsbF, PsbH, PsbI, PsbJ, PsbK, PsbL, PsbM, PsbT, PsbX, PsbY, PsbZ, Psb30/Ycf12, at least 3 peripheral proteins of the oxygen-evolving complex and a large number of cofactors. It forms dimeric complexes.

The protein localises to the plastid. It localises to the chloroplast thylakoid membrane. One of the components of the core complex of photosystem II (PSII). PSII is a light-driven water:plastoquinone oxidoreductase that uses light energy to abstract electrons from H(2)O, generating O(2) and a proton gradient subsequently used for ATP formation. It consists of a core antenna complex that captures photons, and an electron transfer chain that converts photonic excitation into a charge separation. This subunit is found at the monomer-monomer interface. This Piper cenocladum (Ant piper) protein is Photosystem II reaction center protein M.